Reading from the N-terminus, the 221-residue chain is Succinate--CoA ligase [ADP-forming] subunit beta, mitochondrial (221 aa).

Residues 1–122 (DVVIKAQVLA…DSNSAYRQKI (122 aa)) enclose the ATP-grasp domain. Lysine 5 contributes to the ATP binding site. Lysine 22 and lysine 26 each carry N6-acetyllysine. Serine 114 bears the Phosphoserine mark. Phosphothreonine is present on threonine 139. Residue 171-173 (GIM) participates in substrate binding. Residue lysine 196 is modified to N6-acetyllysine.

The protein belongs to the succinate/malate CoA ligase beta subunit family. ATP-specific subunit beta subfamily. As to quaternary structure, heterodimer of an alpha and a beta subunit. The beta subunit determines specificity for ATP. Interacts with ALAS2.

It is found in the mitochondrion. The catalysed reaction is succinate + ATP + CoA = succinyl-CoA + ADP + phosphate. It participates in carbohydrate metabolism; tricarboxylic acid cycle; succinate from succinyl-CoA (ligase route): step 1/1. Its function is as follows. ATP-specific succinyl-CoA synthetase functions in the citric acid cycle (TCA), coupling the hydrolysis of succinyl-CoA to the synthesis of ATP and thus represents the only step of substrate-level phosphorylation in the TCA. The beta subunit provides nucleotide specificity of the enzyme and binds the substrate succinate, while the binding sites for coenzyme A and phosphate are found in the alpha subunit. In Mesocricetus auratus (Golden hamster), this protein is Succinate--CoA ligase [ADP-forming] subunit beta, mitochondrial.